A 686-amino-acid polypeptide reads, in one-letter code: Methionine--tRNA ligase (686 aa).

The short motif at 15-25 (PYANGSIHLGH) is the 'HIGH' region element. Residues Cys-146, Cys-149, Cys-159, and Cys-162 each coordinate Zn(2+). The 'KMSKS' region signature appears at 332-336 (KMSKS). Lys-335 contacts ATP. A tRNA-binding domain is found at 585–686 (AFEAVDMRIA…EGAQPGMRVM (102 aa)).

The protein belongs to the class-I aminoacyl-tRNA synthetase family. MetG type 1 subfamily. Homodimer. Zn(2+) serves as cofactor.

The protein resides in the cytoplasm. It carries out the reaction tRNA(Met) + L-methionine + ATP = L-methionyl-tRNA(Met) + AMP + diphosphate. Functionally, is required not only for elongation of protein synthesis but also for the initiation of all mRNA translation through initiator tRNA(fMet) aminoacylation. The protein is Methionine--tRNA ligase of Aliivibrio fischeri (strain ATCC 700601 / ES114) (Vibrio fischeri).